The chain runs to 244 residues: MIIYPAIDLKDGQCVRLVQGRVENKTVYSDAPANVARSFQEQGASFLHIVDLDGAFQGSPQNLKAIEAIAAAIDISFQVGGGLRQLSDVEKLLALGASRVIIGTRAVSHPDFIANLLDKFGPERIVLGLDAKEGMVAVEGWVSTSSVSAIDFGLQMKALGIQTAIYTDVSRDGLLQGPNLAAIKEMASSTGLDIIASGGVSSLDNIRALKELENDGVSGAIIGKALYDGKIGLVDALREAESKF.

Asp-8 functions as the Proton acceptor in the catalytic mechanism. Asp-130 functions as the Proton donor in the catalytic mechanism.

Belongs to the HisA/HisF family.

The protein resides in the cytoplasm. The catalysed reaction is 1-(5-phospho-beta-D-ribosyl)-5-[(5-phospho-beta-D-ribosylamino)methylideneamino]imidazole-4-carboxamide = 5-[(5-phospho-1-deoxy-D-ribulos-1-ylimino)methylamino]-1-(5-phospho-beta-D-ribosyl)imidazole-4-carboxamide. The protein operates within amino-acid biosynthesis; L-histidine biosynthesis; L-histidine from 5-phospho-alpha-D-ribose 1-diphosphate: step 4/9. The protein is 1-(5-phosphoribosyl)-5-[(5-phosphoribosylamino)methylideneamino] imidazole-4-carboxamide isomerase of Syntrophomonas wolfei subsp. wolfei (strain DSM 2245B / Goettingen).